The primary structure comprises 569 residues: Proline--tRNA ligase (569 aa).

It belongs to the class-II aminoacyl-tRNA synthetase family. ProS type 1 subfamily. In terms of assembly, homodimer.

It localises to the cytoplasm. It carries out the reaction tRNA(Pro) + L-proline + ATP = L-prolyl-tRNA(Pro) + AMP + diphosphate. Its function is as follows. Catalyzes the attachment of proline to tRNA(Pro) in a two-step reaction: proline is first activated by ATP to form Pro-AMP and then transferred to the acceptor end of tRNA(Pro). As ProRS can inadvertently accommodate and process non-cognate amino acids such as alanine and cysteine, to avoid such errors it has two additional distinct editing activities against alanine. One activity is designated as 'pretransfer' editing and involves the tRNA(Pro)-independent hydrolysis of activated Ala-AMP. The other activity is designated 'posttransfer' editing and involves deacylation of mischarged Ala-tRNA(Pro). The misacylated Cys-tRNA(Pro) is not edited by ProRS. The polypeptide is Proline--tRNA ligase (Nitrosospira multiformis (strain ATCC 25196 / NCIMB 11849 / C 71)).